A 130-amino-acid polypeptide reads, in one-letter code: Protein lgg-2 (130 aa).

Residue G130 is the site of Phosphatidylethanolamine amidated glycine attachment.

This sequence belongs to the ATG8 family. May interact with vps-39. Interacts with lgg-3; the interaction is direct. Interacts with atg-16.1 (via WD domain) and atg-16.2 (via WD 5-6 repeats); the interactions are direct. Interacts with sepa-1 (via the LIR motifs); the interaction is direct. Interacts with sqst-1 (via the LIR motifs); the interaction is direct. Interacts with epg-2 (via the LIR motifs); the interaction is weak. Interacts with atg-7; the interaction is direct. Interacts with atg-3. The interaction with atg-7 and atg-3 may be required for the lipidation of lgg-2. Post-translationally, this protein is subject to lipidation. Lipidation is regulated by lgg-1.

Its subcellular location is the cytoplasmic vesicle. It localises to the autophagosome. The protein localises to the cytoplasm. The protein resides in the cell membrane. Functionally, ubiquitin-like modifier involved in the formation of autophagosomal vacuoles (autophagosomes). When lipidated mediates tethering between adjacent membranes and stimulates membrane fusion. Less effective at promoting membrane fusion than lgg-1. Acts upstream of the autophagy protein epg-5 in the aggrephagy pathway, which is the macroautophagic degradation of ubiquitinated protein aggregates, and preferentially interacts with autophagy proteins and substrates containing LIR motifs to mediate autophagosome formation and protein aggregate degradation. In particular binds to components of an atg-5-lgg-3-atg-16 complex to regulate autophagosome formation and cargo sequestration. Required for the degradation of specific sqst-1-containing aggregates during embryogenesis and the early stages of larval development. Involved in allophagy, which is an autophagic process in which paternal mitochondria and organelles are degraded during fertilization, and moreover is required for the degradation of lgg-1-positive allophagic autophagosomes in embryos. Involved in xenophagy, the autophagy-mediated degradation of pathogens and pathogen products, such as toxins. Also plays a role in membrane-pore repair. Through HOPS complex subunit vps-39, tethers lysosomes with autophagosomes to form autolysosomes. Plays a role in the distribution and clearance of germ cell specific P-granules from somatic cells to ensure exclusive localization of the P-granules in germ cells. Essential for dauer development and life-span extension. This Caenorhabditis elegans protein is Protein lgg-2.